A 283-amino-acid polypeptide reads, in one-letter code: MPSSTTTAPPGTHPNATASTVFAILGTVCWCVQLIPQIIKNYRAKSTEGLDTLFILSWVVASIPLSVYNQVQELNIALKVQPELFQALAFTTFFQCLYYGSKWPLRKALFVVISFMLFSGGLQAMLILTIKLGIRRHVEWPVVFMGVLATVLVNIGFLPQYISIFRARAVTGISYLFLAIDSSGSLFSFLSLPFDRWDVLAAVDYGLLFIIEMGVFVLAFIFNVLLKNKSTPTDEDVTFTEEDGDEKDEEYSDIFSIKGKFNTRPNAWQNAYDSDTKSAIQIP.

N-linked (GlcNAc...) asparagine glycosylation is present at Asn15. Residues 15 to 81 (NATASTVFAI…QELNIALKVQ (67 aa)) enclose the PQ-loop 1 domain. Transmembrane regions (helical) follow at residues 19–39 (STVF…PQII), 48–68 (EGLD…LSVY), 108–128 (ALFV…MLIL), 138–158 (VEWP…IGFL), 170–190 (VTGI…FSFL), and 206–226 (GLLF…NVLL). In terms of domain architecture, PQ-loop 2 spans 149–204 (ATVLVNIGFLPQYISIFRARAVTGISYLFLAIDSSGSLFSFLSLPFDRWDVLAAVD). Asn228 carries an N-linked (GlcNAc...) asparagine glycan.

The protein resides in the membrane. This is an uncharacterized protein from Schizosaccharomyces pombe (strain 972 / ATCC 24843) (Fission yeast).